Here is a 191-residue protein sequence, read N- to C-terminus: Pyridoxal 5'-phosphate synthase subunit PdxT (191 aa).

46–48 (GES) contributes to the L-glutamine binding site. The Nucleophile role is filled by Cys75. L-glutamine is bound by residues Arg101 and 129–130 (IR). Active-site charge relay system residues include His165 and Glu167.

The protein belongs to the glutaminase PdxT/SNO family. In the presence of PdxS, forms a dodecamer of heterodimers. Only shows activity in the heterodimer.

The catalysed reaction is aldehydo-D-ribose 5-phosphate + D-glyceraldehyde 3-phosphate + L-glutamine = pyridoxal 5'-phosphate + L-glutamate + phosphate + 3 H2O + H(+). It catalyses the reaction L-glutamine + H2O = L-glutamate + NH4(+). It participates in cofactor biosynthesis; pyridoxal 5'-phosphate biosynthesis. In terms of biological role, catalyzes the hydrolysis of glutamine to glutamate and ammonia as part of the biosynthesis of pyridoxal 5'-phosphate. The resulting ammonia molecule is channeled to the active site of PdxS. This is Pyridoxal 5'-phosphate synthase subunit PdxT from Staphylococcus saprophyticus subsp. saprophyticus (strain ATCC 15305 / DSM 20229 / NCIMB 8711 / NCTC 7292 / S-41).